Reading from the N-terminus, the 956-residue chain is Translation initiation factor IF-2 (956 aa).

The interval 68 to 357 (APEAAAPKAP…GVSVPRGDGN (290 aa)) is disordered. Composition is skewed to low complexity over residues 86–123 (AKPAEAQASVKPVETQAPATPAAAKAAATPVAPAAPAV), 141–156 (PGNNPFATSQGMPRAG), 164–175 (PAAAPASGAGRP), and 212–235 (GPRPAAGSGGPRPAAGSGGPRPAA). 2 stretches are compositionally biased toward gly residues: residues 236-257 (GSGGPRPGAGSGASRPGGGGGN) and 276-324 (RGAG…GAGR). Positions 325–334 (GKQRKSKRAK) are enriched in basic residues. In terms of domain architecture, tr-type G spans 449 to 620 (ARPPVVTVMG…AVMLTADAAL (172 aa)). Residues 458-465 (GHVDHGKT) form a G1 region. 458–465 (GHVDHGKT) provides a ligand contact to GTP. Positions 483–487 (GITQH) are G2. Residues 508–511 (DTPG) form a G3 region. GTP-binding positions include 508–512 (DTPGH) and 562–565 (NKID). A G4 region spans residues 562-565 (NKID). The segment at 598-600 (SAR) is G5.

Belongs to the TRAFAC class translation factor GTPase superfamily. Classic translation factor GTPase family. IF-2 subfamily.

The protein localises to the cytoplasm. In terms of biological role, one of the essential components for the initiation of protein synthesis. Protects formylmethionyl-tRNA from spontaneous hydrolysis and promotes its binding to the 30S ribosomal subunits. Also involved in the hydrolysis of GTP during the formation of the 70S ribosomal complex. The polypeptide is Translation initiation factor IF-2 (Renibacterium salmoninarum (strain ATCC 33209 / DSM 20767 / JCM 11484 / NBRC 15589 / NCIMB 2235)).